The following is a 209-amino-acid chain: Ribosomal RNA large subunit methyltransferase E (209 aa).

S-adenosyl-L-methionine contacts are provided by G63, W65, D83, D99, and D124. K164 functions as the Proton acceptor in the catalytic mechanism.

It belongs to the class I-like SAM-binding methyltransferase superfamily. RNA methyltransferase RlmE family.

The protein localises to the cytoplasm. The enzyme catalyses uridine(2552) in 23S rRNA + S-adenosyl-L-methionine = 2'-O-methyluridine(2552) in 23S rRNA + S-adenosyl-L-homocysteine + H(+). Functionally, specifically methylates the uridine in position 2552 of 23S rRNA at the 2'-O position of the ribose in the fully assembled 50S ribosomal subunit. This chain is Ribosomal RNA large subunit methyltransferase E, found in Alkalilimnicola ehrlichii (strain ATCC BAA-1101 / DSM 17681 / MLHE-1).